The following is a 548-amino-acid chain: Eukaryotic translation initiation factor 3 subunit D (548 aa).

Lys53 is modified (N6-acetyllysine). Ser161 is subject to Phosphoserine. The tract at residues 285–299 is RNA gate; sequence DFDLPTVSETANEPP. Disordered stretches follow at residues 288-309 and 523-548; these read LPTV…FNSP and PDGT…EEET. Over residues 291 to 309 the composition is skewed to polar residues; that stretch reads VSETANEPPQDEGNSFNSP. Ser528 and Ser529 each carry phosphoserine. Over residues 529-548 the composition is skewed to acidic residues; that stretch reads SDEDEEEEEEEEEEEEEEET.

The protein belongs to the eIF-3 subunit D family. In terms of assembly, component of the eukaryotic translation initiation factor 3 (eIF-3) complex, which is composed of 13 subunits: EIF3A, EIF3B, EIF3C, EIF3D, EIF3E, EIF3F, EIF3G, EIF3H, EIF3I, EIF3J, EIF3K, EIF3L and EIF3M. The eIF-3 complex appears to include 3 stable modules: module A is composed of EIF3A, EIF3B, EIF3G and EIF3I; module B is composed of EIF3F, EIF3H, and EIF3M; and module C is composed of EIF3C, EIF3D, EIF3E, EIF3K and EIF3L. EIF3C of module C binds EIF3B of module A and EIF3H of module B, thereby linking the three modules. EIF3J is a labile subunit that binds to the eIF-3 complex via EIF3B. The eIF-3 complex interacts with RPS6KB1 under conditions of nutrient depletion. Mitogenic stimulation leads to binding and activation of a complex composed of MTOR and RPTOR, leading to phosphorylation and release of RPS6KB1 and binding of EIF4B to eIF-3.

The protein localises to the cytoplasm. Functionally, mRNA cap-binding component of the eukaryotic translation initiation factor 3 (eIF-3) complex, a complex required for several steps in the initiation of protein synthesis of a specialized repertoire of mRNAs. The eIF-3 complex associates with the 40S ribosome and facilitates the recruitment of eIF-1, eIF-1A, eIF-2:GTP:methionyl-tRNAi and eIF-5 to form the 43S pre-initiation complex (43S PIC). The eIF-3 complex stimulates mRNA recruitment to the 43S PIC and scanning of the mRNA for AUG recognition. The eIF-3 complex is also required for disassembly and recycling of post-termination ribosomal complexes and subsequently prevents premature joining of the 40S and 60S ribosomal subunits prior to initiation. The eIF-3 complex specifically targets and initiates translation of a subset of mRNAs involved in cell proliferation, including cell cycling, differentiation and apoptosis, and uses different modes of RNA stem-loop binding to exert either translational activation or repression. In the eIF-3 complex, EIF3D specifically recognizes and binds the 7-methylguanosine cap of a subset of mRNAs. This chain is Eukaryotic translation initiation factor 3 subunit D, found in Pongo abelii (Sumatran orangutan).